We begin with the raw amino-acid sequence, 323 residues long: Beta-ketoacyl-[acyl-carrier-protein] synthase III (323 aa).

Catalysis depends on residues cysteine 113 and histidine 250. The interval 251–255 (QANKR) is ACP-binding. Residue asparagine 280 is part of the active site.

It belongs to the thiolase-like superfamily. FabH family. As to quaternary structure, homodimer.

The protein resides in the cytoplasm. The catalysed reaction is malonyl-[ACP] + acetyl-CoA + H(+) = 3-oxobutanoyl-[ACP] + CO2 + CoA. It participates in lipid metabolism; fatty acid biosynthesis. Functionally, catalyzes the condensation reaction of fatty acid synthesis by the addition to an acyl acceptor of two carbons from malonyl-ACP. Catalyzes the first condensation reaction which initiates fatty acid synthesis and may therefore play a role in governing the total rate of fatty acid production. Possesses both acetoacetyl-ACP synthase and acetyl transacylase activities. Its substrate specificity determines the biosynthesis of branched-chain and/or straight-chain of fatty acids. The protein is Beta-ketoacyl-[acyl-carrier-protein] synthase III of Brucella abortus biovar 1 (strain 9-941).